Consider the following 91-residue polypeptide: ATP-dependent Clp protease adapter protein ClpS (91 aa).

This sequence belongs to the ClpS family. Binds to the N-terminal domain of the chaperone ClpA.

Functionally, involved in the modulation of the specificity of the ClpAP-mediated ATP-dependent protein degradation. The sequence is that of ATP-dependent Clp protease adapter protein ClpS from Synechococcus sp. (strain ATCC 27144 / PCC 6301 / SAUG 1402/1) (Anacystis nidulans).